We begin with the raw amino-acid sequence, 389 residues long: Chalcone synthase H2 (389 aa).

Cysteine 164 is an active-site residue.

The protein belongs to the thiolase-like superfamily. Chalcone/stilbene synthases family.

It localises to the cytoplasm. The catalysed reaction is (E)-4-coumaroyl-CoA + 3 malonyl-CoA + 3 H(+) = 2',4,4',6'-tetrahydroxychalcone + 3 CO2 + 4 CoA. Its pathway is secondary metabolite biosynthesis; flavonoid biosynthesis. Involved in the biosynthesis of prenylated phenolics natural products which contribute to the bitter taste of beer and display broad biological activities. Chalcone synthase that can use 4-coumaroyl-CoA to produce 4,2',4',6'-tetrahydroxychalcone (also termed naringenin-chalcone or chalcone) which can, under specific conditions, spontaneously isomerize into naringenin. The protein is Chalcone synthase H2 of Humulus lupulus (European hop).